A 162-amino-acid polypeptide reads, in one-letter code: UPF0260 protein Atu0932 (162 aa).

It belongs to the UPF0260 family.

The sequence is that of UPF0260 protein Atu0932 from Agrobacterium fabrum (strain C58 / ATCC 33970) (Agrobacterium tumefaciens (strain C58)).